The following is a 316-amino-acid chain: GTP cyclohydrolase FolE2 1 (316 aa).

The protein belongs to the GTP cyclohydrolase IV family.

It carries out the reaction GTP + H2O = 7,8-dihydroneopterin 3'-triphosphate + formate + H(+). Its pathway is cofactor biosynthesis; 7,8-dihydroneopterin triphosphate biosynthesis; 7,8-dihydroneopterin triphosphate from GTP: step 1/1. Converts GTP to 7,8-dihydroneopterin triphosphate. The chain is GTP cyclohydrolase FolE2 1 from Burkholderia orbicola (strain AU 1054).